Reading from the N-terminus, the 383-residue chain is NIPA-like protein 2 (383 aa).

Residues N23 and N33 are each glycosylated (N-linked (GlcNAc...) asparagine). The next 7 membrane-spanning stretches (helical) occupy residues 46–66 (IHLF…ISLN), 88–108 (VLWW…FAAY), 110–130 (FAPI…SAII), 144–164 (LLGT…APNI), 177–197 (LVGW…CILL), 209–229 (VILL…VKAV), and 243–263 (LTYP…VFQV). N-linked (GlcNAc...) asparagine glycosylation occurs at N274. Helical transmembrane passes span 278-298 (VVPV…IIFY) and 306-326 (FLTV…VFLV). The segment at 355–383 (QPDSHSLSYGTLPDGSDSTKSQSGEKKEV) is disordered.

It belongs to the NIPA family.

The protein resides in the membrane. The chain is NIPA-like protein 2 (NIPAL2) from Homo sapiens (Human).